The following is a 465-amino-acid chain: Ribulose bisphosphate carboxylase large chain (465 aa).

Lysine 4 is modified (N6,N6,N6-trimethyllysine). Asparagine 113 and threonine 163 together coordinate substrate. The active-site Proton acceptor is the lysine 165. A substrate-binding site is contributed by lysine 167. Mg(2+) is bound by residues lysine 191, aspartate 193, and glutamate 194. Lysine 191 bears the N6-carboxylysine mark. The active-site Proton acceptor is the histidine 284. Residues arginine 285, histidine 317, and serine 369 each contribute to the substrate site.

The protein belongs to the RuBisCO large chain family. Type I subfamily. In terms of assembly, heterohexadecamer of 8 large chains and 8 small chains; disulfide-linked. The disulfide link is formed within the large subunit homodimers. Mg(2+) is required as a cofactor. Post-translationally, the disulfide bond which can form in the large chain dimeric partners within the hexadecamer appears to be associated with oxidative stress and protein turnover.

It is found in the plastid. It localises to the chloroplast. It catalyses the reaction 2 (2R)-3-phosphoglycerate + 2 H(+) = D-ribulose 1,5-bisphosphate + CO2 + H2O. It carries out the reaction D-ribulose 1,5-bisphosphate + O2 = 2-phosphoglycolate + (2R)-3-phosphoglycerate + 2 H(+). Its function is as follows. RuBisCO catalyzes two reactions: the carboxylation of D-ribulose 1,5-bisphosphate, the primary event in carbon dioxide fixation, as well as the oxidative fragmentation of the pentose substrate in the photorespiration process. Both reactions occur simultaneously and in competition at the same active site. The protein is Ribulose bisphosphate carboxylase large chain of Morella cerifera (Wax myrtle).